The primary structure comprises 278 residues: BPI fold-containing family A member 1 (278 aa).

The first 19 residues, 1–19, serve as a signal peptide directing secretion; sequence MFLVGSLVVLCGLLAHSTA. 4 Repeat repeats span residues 23-28, 30-36, 39-44, and 47-52; these read GLPLPL, QGPPLPL, GPPLPL, and GQLLPL. The tract at residues 23 to 52 is 4 X 6 AA repeats of G-[LPQ]-[PL]-L-P-L; that stretch reads GLPLPLGQGPPLPLNQGPPLPLNQGQLLPL. An important for surfactant activity and antibacterial properties region spans residues 112–117; that stretch reads LVGGLL. 2 N-linked (GlcNAc...) asparagine glycosylation sites follow: Asn-182 and Asn-228. A disulfide bridge connects residues Cys-204 and Cys-246.

It belongs to the BPI/LBP/Plunc superfamily. Plunc family. In terms of assembly, monomer. Interacts (via N-terminus) with SCNN1B, a subunit of the heterotrimeric epithelial sodium channel (ENaC); this inhibits proteolytic activation of ENaC. As to expression, detected in airway epithelia (trachea and lung) and in bronchoalveolar fluid (at protein level). Upper airways, nasopharyngeal epithelium and thymus. Highest expression in the trachea and progressive decrease from proximal (bronchial) to distal (bronchiolar) airways. No expression is detected in the terminal bronchioles, respiratory bronchioles or lung alveoli.

The protein localises to the secreted. In terms of biological role, lipid-binding protein which shows high specificity for the surfactant phospholipid dipalmitoylphosphatidylcholine (DPPC). Plays a role in the innate immune responses of the upper airways. Reduces the surface tension in secretions from airway epithelia and inhibits the formation of biofilm by pathogenic Gram-negative bacteria, such as P.aeruginosa and K.pneumoniae. Negatively regulates proteolytic cleavage of SCNN1G, an event that is required for activation of the epithelial sodium channel (ENaC), and thereby contributes to airway surface liquid homeostasis and proper clearance of mucus. Plays a role in the airway inflammatory response after exposure to irritants. May attract macrophages and neutrophils. The sequence is that of BPI fold-containing family A member 1 (Bpifa1) from Mus musculus (Mouse).